Reading from the N-terminus, the 400-residue chain is GTPase-binding protein rid1 (400 aa).

Over residues 16–27 the composition is skewed to polar residues; it reads LSSDGLSESVNS. A disordered region spans residues 16–47; that stretch reads LSSDGLSESVNSSDREDSLSFQTPSTPSEDEM. The GBD/FH3 domain maps to 39 to 400; it reads PSTPSEDEMP…PYKLVQTGST (362 aa).

The protein resides in the cytoplasm. This chain is GTPase-binding protein rid1 (rid1), found in Schizosaccharomyces pombe (strain 972 / ATCC 24843) (Fission yeast).